The sequence spans 222 residues: Vesicle transport v-SNARE 12 (222 aa).

At Ser-2 the chain carries N-acetylserine. The Cytoplasmic segment spans residues 2–199 (SDVFEGYERQ…MSRRMTRNKW (198 aa)). Residues 68–95 (KAVCLSKLREYKSDLNQLKKEFKRVSSA) are a coiled coil. A helical; Anchor for type IV membrane protein transmembrane segment spans residues 200-220 (IITSVIVALVLAIILIISYKL). The Vesicular segment spans residues 221–222 (SH).

It belongs to the VTI1 family. As to quaternary structure, forms SNARE complexes with the t-SNAREs SYP61 and either SYP41 or SYP42, and with a much lower affinity with SYP51 in the TGN. Also interacts with VPS45, a Sec1 protein, but not with SYP21 or SYP22. Binds to EPSIN2. Core constituent of the SNARE complex required for membrane fusion at the trans-Golgi network. Interacts with SCYL2B. As to expression, expressed in roots, stems, flowers and leaves.

It is found in the golgi apparatus. The protein resides in the trans-Golgi network membrane. The protein localises to the prevacuolar compartment membrane. It localises to the cell membrane. Its function is as follows. Together with either SYP41 or SYP61, required for membrane fusion; the fusion of phospholipid vesicles containing SYP41 or SYP61 and VTI12 is triggered by YKT61 and YKT62. Functions as a v-SNARE responsible for the docking or fusion of transport vesicles within the trans-Golgi network (TGN) and mediates liposome fusion. Necessary to deliver proteins to the protein storage vacuole (PSV). May be also involved in retrograde traffic to the cis-Golgi. This Arabidopsis thaliana (Mouse-ear cress) protein is Vesicle transport v-SNARE 12.